A 200-amino-acid chain; its full sequence is Large ribosomal subunit protein uL4 (200 aa).

Positions 38-68 (GRQGSKQQKTRSDVRGGGKRPWRQKGTGRAR) are disordered. Residues 54–65 (GGKRPWRQKGTG) are compositionally biased toward basic residues.

This sequence belongs to the universal ribosomal protein uL4 family. Part of the 50S ribosomal subunit.

Its function is as follows. One of the primary rRNA binding proteins, this protein initially binds near the 5'-end of the 23S rRNA. It is important during the early stages of 50S assembly. It makes multiple contacts with different domains of the 23S rRNA in the assembled 50S subunit and ribosome. Functionally, forms part of the polypeptide exit tunnel. This chain is Large ribosomal subunit protein uL4, found in Pseudomonas syringae pv. tomato (strain ATCC BAA-871 / DC3000).